The chain runs to 186 residues: Mating-type-like protein ALPHA2 (186 aa).

The homeobox; TALE-type DNA-binding region spans 112–174; the sequence is KKIKSRRLTK…NRRRKEKNTK (63 aa).

It belongs to the TALE/M-ATYP homeobox family. Forms a heterodimer with A1.

It localises to the nucleus. Mating type proteins are sequence specific DNA-binding proteins that act as master switches in yeast differentiation by controlling gene expression in a cell type-specific fashion. Transcriptional corepressor that acts in conjunction with A1 to repress transcription both of homozygote-specific genes and of genes necessary for the white-opaque switch, a prerequisite for mating. This chain is Mating-type-like protein ALPHA2 (MTLALPHA2), found in Candida albicans (strain SC5314 / ATCC MYA-2876) (Yeast).